Consider the following 434-residue polypeptide: Adenylosuccinate synthetase (434 aa).

GTP is bound by residues 11 to 17 (GDEGKGK) and 39 to 41 (GHT). D12 functions as the Proton acceptor in the catalytic mechanism. 2 residues coordinate Mg(2+): D12 and G39. Residues 12 to 15 (DEGK), 37 to 40 (NAGH), T134, R148, N230, T245, and R309 contribute to the IMP site. H40 (proton donor) is an active-site residue. Residue 305-311 (VTTGRKR) coordinates substrate. GTP-binding positions include R311, 337–339 (KLD), and 419–421 (GTG).

This sequence belongs to the adenylosuccinate synthetase family. In terms of assembly, homodimer. The cofactor is Mg(2+).

It is found in the cytoplasm. It catalyses the reaction IMP + L-aspartate + GTP = N(6)-(1,2-dicarboxyethyl)-AMP + GDP + phosphate + 2 H(+). It functions in the pathway purine metabolism; AMP biosynthesis via de novo pathway; AMP from IMP: step 1/2. Its function is as follows. Plays an important role in the de novo pathway and in the salvage pathway of purine nucleotide biosynthesis. Catalyzes the first committed step in the biosynthesis of AMP from IMP. The polypeptide is Adenylosuccinate synthetase (Lachancea thermotolerans (strain ATCC 56472 / CBS 6340 / NRRL Y-8284) (Yeast)).